Here is a 158-residue protein sequence, read N- to C-terminus: RNA pyrophosphohydrolase (158 aa).

One can recognise a Nudix hydrolase domain in the interval 8-152 (PYRPCAGVML…KRALYRGLIE (145 aa)). The Nudix box motif lies at 42–63 (GGIDEGEDAEKAAIRELGEETG).

Belongs to the Nudix hydrolase family. RppH subfamily. A divalent metal cation is required as a cofactor.

In terms of biological role, accelerates the degradation of transcripts by removing pyrophosphate from the 5'-end of triphosphorylated RNA, leading to a more labile monophosphorylated state that can stimulate subsequent ribonuclease cleavage. The chain is RNA pyrophosphohydrolase from Sphingopyxis alaskensis (strain DSM 13593 / LMG 18877 / RB2256) (Sphingomonas alaskensis).